Here is a 158-residue protein sequence, read N- to C-terminus: Large ribosomal subunit protein uL15 (158 aa).

Over residues Met-1–Thr-13 the composition is skewed to basic and acidic residues. The interval Met-1–Ala-45 is disordered. Residues Arg-21 to Val-35 show a composition bias toward gly residues.

Belongs to the universal ribosomal protein uL15 family. Part of the 50S ribosomal subunit.

Its function is as follows. Binds to the 23S rRNA. This Rhizobium leguminosarum bv. trifolii (strain WSM2304) protein is Large ribosomal subunit protein uL15.